Here is a 156-residue protein sequence, read N- to C-terminus: Baculoviral IAP repeat-containing protein 5.2 (156 aa).

The stretch at 30–100 (RLSTFANWPF…KHSPSCLFIA (71 aa)) is one BIR repeat. Threonine 46 is subject to Phosphothreonine; by CDK1. Zn(2+)-binding residues include cysteine 69, cysteine 72, histidine 89, and cysteine 96.

The protein belongs to the IAP family. In terms of assembly, component of the CPC at least composed of survivin/birc5, incenp, cdca8/borealin and/or cdca9/dasra-A, and aurkb/aurora-B. Interacts directly with incenp (via N-terminus). Interacts with rxra; the interaction is stronger in the absence of 9-cis retinoic acids. In terms of processing, ubiquitination is required for centrosome-targeting.

It localises to the cytoplasm. Its subcellular location is the nucleus. The protein resides in the chromosome. It is found in the centromere. The protein localises to the cytoskeleton. It localises to the spindle. Functionally, component of the chromosomal passenger complex (CPC), a complex that acts as a key regulator of mitosis. The CPC complex has essential functions at the centromere in ensuring correct chromosome alignment and segregation and is required for chromatin-induced microtubule stabilization and spindle assembly. Does not appear to exhibit anti-apoptotic activity. Plays a role in increasing blood vessel size during development. The chain is Baculoviral IAP repeat-containing protein 5.2 (birc5.2) from Xenopus tropicalis (Western clawed frog).